The following is a 250-amino-acid chain: Uracil-DNA glycosylase (250 aa).

Asp78 (proton acceptor) is an active-site residue. A disordered region spans residues 228 to 250 (RGQKPVDWSGEQNNASRQGKFAL).

The protein belongs to the uracil-DNA glycosylase (UDG) superfamily. UNG family.

The protein resides in the cytoplasm. It carries out the reaction Hydrolyzes single-stranded DNA or mismatched double-stranded DNA and polynucleotides, releasing free uracil.. In terms of biological role, excises uracil residues from the DNA which can arise as a result of misincorporation of dUMP residues by DNA polymerase or due to deamination of cytosine. The chain is Uracil-DNA glycosylase from Bordetella bronchiseptica (strain ATCC BAA-588 / NCTC 13252 / RB50) (Alcaligenes bronchisepticus).